Consider the following 339-residue polypeptide: tRNA N6-adenosine threonylcarbamoyltransferase (339 aa).

2 residues coordinate Fe cation: H111 and H115. Residues L134–G138, D167, G180, and N274 contribute to the substrate site. D302 is a binding site for Fe cation.

This sequence belongs to the KAE1 / TsaD family. Fe(2+) is required as a cofactor.

It is found in the cytoplasm. It carries out the reaction L-threonylcarbamoyladenylate + adenosine(37) in tRNA = N(6)-L-threonylcarbamoyladenosine(37) in tRNA + AMP + H(+). Required for the formation of a threonylcarbamoyl group on adenosine at position 37 (t(6)A37) in tRNAs that read codons beginning with adenine. Is involved in the transfer of the threonylcarbamoyl moiety of threonylcarbamoyl-AMP (TC-AMP) to the N6 group of A37, together with TsaE and TsaB. TsaD likely plays a direct catalytic role in this reaction. In Methylobacillus flagellatus (strain ATCC 51484 / DSM 6875 / VKM B-1610 / KT), this protein is tRNA N6-adenosine threonylcarbamoyltransferase.